The primary structure comprises 315 residues: NAD-dependent protein deacylase sirtuin-5, mitochondrial (315 aa).

The N-terminal 39 residues, 1–39 (MSLLHFATRRLILQVLRELGLKAPPVHKTLKICIAMSRP), are a transit peptide targeting the mitochondrion. Positions 40 to 312 (SSNMADFRRF…PEALSPHESE (273 aa)) constitute a Deacetylase sirtuin-type domain. An NAD(+)-binding site is contributed by 61-80 (GAGVSAESGVPTFRGPGGFW). Substrate-binding residues include Y105 and R108. Position 143-146 (143-146 (QNID)) interacts with NAD(+). Residue H161 is the Proton acceptor of the active site. NAD(+)-binding positions include 254-256 (GTS), 280-282 (NTV), and C298.

It belongs to the sirtuin family. Class III subfamily. As to quaternary structure, monomer. Homodimer. Interacts with CPS1.

Its subcellular location is the mitochondrion. It is found in the cytoplasm. It localises to the cytosol. The protein localises to the nucleus. It catalyses the reaction N(6)-malonyl-L-lysyl-[protein] + NAD(+) + H2O = 2''-O-malonyl-ADP-D-ribose + nicotinamide + L-lysyl-[protein]. The catalysed reaction is N(6)-succinyl-L-lysyl-[protein] + NAD(+) + H2O = 2''-O-succinyl-ADP-D-ribose + nicotinamide + L-lysyl-[protein]. It carries out the reaction N(6)-glutaryl-L-lysyl-[protein] + NAD(+) + H2O = 2''-O-glutaryl-ADP-D-ribose + nicotinamide + L-lysyl-[protein]. NAD-dependent lysine demalonylase, desuccinylase and deglutarylase that specifically removes malonyl, succinyl and glutaryl groups on target proteins. Activates CPS1 and contributes to the regulation of blood ammonia levels during prolonged fasting: acts by mediating desuccinylation and deglutarylation of CPS1, thereby increasing CPS1 activity in response to elevated NAD levels during fasting. Activates SOD1 by mediating its desuccinylation, leading to reduced reactive oxygen species. Activates SHMT2 by mediating its desuccinylation. Modulates ketogenesis through the desuccinylation and activation of HMGCS2. Has weak NAD-dependent protein deacetylase activity; however this activity may not be physiologically relevant in vivo. Can deacetylate cytochrome c (CYCS) and a number of other proteins in vitro such as UOX. This Monodelphis domestica (Gray short-tailed opossum) protein is NAD-dependent protein deacylase sirtuin-5, mitochondrial.